The primary structure comprises 339 residues: Adenylosuccinate synthetase (339 aa).

GTP is bound by residues 12–18 (GDEGKGS) and 42–44 (GHS). The Proton acceptor role is filled by D13. Positions 13 and 42 each coordinate Mg(2+). IMP contacts are provided by residues 13 to 16 (DEGK), 40 to 43 (NAGH), T127, R141, Q179, T194, and R256. Catalysis depends on H43, which acts as the Proton donor. Substrate is bound at residue 252-258 (TVTGRRR). Residues R258, 284-286 (MLD), and 324-326 (KTG) each bind GTP.

The protein belongs to the adenylosuccinate synthetase family. As to quaternary structure, homodimer. Mg(2+) serves as cofactor.

The protein localises to the cytoplasm. It catalyses the reaction IMP + L-aspartate + GTP = N(6)-(1,2-dicarboxyethyl)-AMP + GDP + phosphate + 2 H(+). It participates in purine metabolism; AMP biosynthesis via de novo pathway; AMP from IMP: step 1/2. Its function is as follows. Plays an important role in the de novo pathway of purine nucleotide biosynthesis. Catalyzes the first committed step in the biosynthesis of AMP from IMP. The sequence is that of Adenylosuccinate synthetase from Pyrococcus horikoshii (strain ATCC 700860 / DSM 12428 / JCM 9974 / NBRC 100139 / OT-3).